The chain runs to 429 residues: Serine hydroxymethyltransferase (429 aa).

(6S)-5,6,7,8-tetrahydrofolate-binding positions include leucine 133 and 137 to 139; that span reads GHL. Lysine 243 is modified (N6-(pyridoxal phosphate)lysine). Glutamate 259 is a (6S)-5,6,7,8-tetrahydrofolate binding site.

The protein belongs to the SHMT family. Homodimer. Pyridoxal 5'-phosphate is required as a cofactor.

It localises to the cytoplasm. It catalyses the reaction (6R)-5,10-methylene-5,6,7,8-tetrahydrofolate + glycine + H2O = (6S)-5,6,7,8-tetrahydrofolate + L-serine. It functions in the pathway one-carbon metabolism; tetrahydrofolate interconversion. It participates in amino-acid biosynthesis; glycine biosynthesis; glycine from L-serine: step 1/1. In terms of biological role, catalyzes the reversible interconversion of serine and glycine with tetrahydrofolate (THF) serving as the one-carbon carrier. This reaction serves as the major source of one-carbon groups required for the biosynthesis of purines, thymidylate, methionine, and other important biomolecules. Also exhibits THF-independent aldolase activity toward beta-hydroxyamino acids, producing glycine and aldehydes, via a retro-aldol mechanism. The protein is Serine hydroxymethyltransferase of Aster yellows witches'-broom phytoplasma (strain AYWB).